We begin with the raw amino-acid sequence, 612 residues long: Threonine--tRNA ligase (612 aa).

A catalytic region spans residues 218–509 (DHRKLGVELG…LSEHFGGNFP (292 aa)). Zn(2+) is bound by residues Cys-310, His-361, and His-486.

It belongs to the class-II aminoacyl-tRNA synthetase family. As to quaternary structure, homodimer. Requires Zn(2+) as cofactor.

The protein resides in the cytoplasm. The catalysed reaction is tRNA(Thr) + L-threonine + ATP = L-threonyl-tRNA(Thr) + AMP + diphosphate + H(+). Its function is as follows. Catalyzes the attachment of threonine to tRNA(Thr) in a two-step reaction: L-threonine is first activated by ATP to form Thr-AMP and then transferred to the acceptor end of tRNA(Thr). Also edits incorrectly charged L-seryl-tRNA(Thr). This is Threonine--tRNA ligase from Helicobacter pylori (strain J99 / ATCC 700824) (Campylobacter pylori J99).